The following is a 265-amino-acid chain: Hydroxyethylthiazole kinase 2 (265 aa).

M39 contacts substrate. K115 and T168 together coordinate ATP. G195 is a binding site for substrate.

This sequence belongs to the Thz kinase family. Mg(2+) serves as cofactor.

The catalysed reaction is 5-(2-hydroxyethyl)-4-methylthiazole + ATP = 4-methyl-5-(2-phosphooxyethyl)-thiazole + ADP + H(+). The protein operates within cofactor biosynthesis; thiamine diphosphate biosynthesis; 4-methyl-5-(2-phosphoethyl)-thiazole from 5-(2-hydroxyethyl)-4-methylthiazole: step 1/1. Functionally, catalyzes the phosphorylation of the hydroxyl group of 4-methyl-5-beta-hydroxyethylthiazole (THZ). The polypeptide is Hydroxyethylthiazole kinase 2 (Clostridium botulinum (strain 657 / Type Ba4)).